Reading from the N-terminus, the 344-residue chain is Anthranilate phosphoribosyltransferase (344 aa).

Residues G84, 87 to 88 (GD), T92, 94 to 97 (NIST), 112 to 120 (KHGGRSVSS), and S124 contribute to the 5-phospho-alpha-D-ribose 1-diphosphate site. G84 serves as a coordination point for anthranilate. Mg(2+) is bound at residue S96. An anthranilate-binding site is contributed by R170. Mg(2+)-binding residues include D229 and E230.

Belongs to the anthranilate phosphoribosyltransferase family. In terms of assembly, homodimer. Mg(2+) serves as cofactor.

The catalysed reaction is N-(5-phospho-beta-D-ribosyl)anthranilate + diphosphate = 5-phospho-alpha-D-ribose 1-diphosphate + anthranilate. It participates in amino-acid biosynthesis; L-tryptophan biosynthesis; L-tryptophan from chorismate: step 2/5. Catalyzes the transfer of the phosphoribosyl group of 5-phosphorylribose-1-pyrophosphate (PRPP) to anthranilate to yield N-(5'-phosphoribosyl)-anthranilate (PRA). The sequence is that of Anthranilate phosphoribosyltransferase from Janthinobacterium sp. (strain Marseille) (Minibacterium massiliensis).